A 624-amino-acid chain; its full sequence is Histone-lysine N-methyltransferase, H3 lysine-9 specific SUVH4 (624 aa).

2 disordered regions span residues 1 to 25 and 54 to 86; these read MAGK…VQKV and DDTE…KGKQ. Residues 149-302 enclose the YDG domain; it reads GDLPGIDVGH…FTVYKYRLKR (154 aa). The Pre-SET domain maps to 381 to 443; that stretch reads TGCNCRGSCT…KCVNRTSQKR (63 aa). The Zn(2+) site is built by Cys-383, Cys-385, Cys-389, Cys-395, Cys-397, Cys-425, Cys-429, Cys-431, and Cys-435. Residues 446–594 enclose the SET domain; the sequence is FNLEVFRSAK…PMQELTYDYG (149 aa). Residues 456–458, Tyr-493, Arg-548, and 551–552 each bind S-adenosyl-L-methionine; these read KGW and NH. Zn(2+) is bound by residues Cys-554, Cys-612, Cys-614, and Cys-619. The 17-residue stretch at 608–624 folds into the Post-SET domain; it reads KQLACYCGALNCRKRLY.

The protein belongs to the class V-like SAM-binding methyltransferase superfamily. Histone-lysine methyltransferase family. Suvar3-9 subfamily. Interacts with H3 histone. In terms of tissue distribution, expressed in leaves stems and flowers.

It localises to the nucleus. The protein localises to the chromosome. It is found in the centromere. It carries out the reaction N(6)-methyl-L-lysyl(9)-[histone H3] + S-adenosyl-L-methionine = N(6),N(6)-dimethyl-L-lysyl(9)-[histone H3] + S-adenosyl-L-homocysteine + H(+). The enzyme catalyses L-lysyl(9)-[histone H3] + S-adenosyl-L-methionine = N(6)-methyl-L-lysyl(9)-[histone H3] + S-adenosyl-L-homocysteine + H(+). In terms of biological role, histone methyltransferase. Methylates 'Lys-9' of histone H3. H3 'Lys-9' methylation represents a specific tag for epigenetic transcriptional repression. The silencing mechanism via DNA CpNpG methylation requires the targeting of chromomethylase CMT3 to methylated histones, probably through an interaction with an HP1-like adapter. By its function, KYP is directly required for the maintenance of the DNA CpNpG and asymmetric methylation. Involved in the silencing of transposable elements. This chain is Histone-lysine N-methyltransferase, H3 lysine-9 specific SUVH4 (SUVH4), found in Arabidopsis thaliana (Mouse-ear cress).